The primary structure comprises 337 residues: tRNA dimethylallyltransferase (337 aa).

24-31 lines the ATP pocket; it reads GPTGAGKT. Position 26-31 (26-31) interacts with substrate; the sequence is TGAGKT. Interaction with substrate tRNA stretches follow at residues 49 to 52 and 188 to 192; these read DSRQ and QRAVR.

This sequence belongs to the IPP transferase family. In terms of assembly, monomer. Mg(2+) is required as a cofactor.

It carries out the reaction adenosine(37) in tRNA + dimethylallyl diphosphate = N(6)-dimethylallyladenosine(37) in tRNA + diphosphate. In terms of biological role, catalyzes the transfer of a dimethylallyl group onto the adenine at position 37 in tRNAs that read codons beginning with uridine, leading to the formation of N6-(dimethylallyl)adenosine (i(6)A). The sequence is that of tRNA dimethylallyltransferase from Nitratidesulfovibrio vulgaris (strain DSM 19637 / Miyazaki F) (Desulfovibrio vulgaris).